The following is a 168-amino-acid chain: MAEVRDRNLPHQVQVHPQYRLDNTTGGGYGAKNYHSGPSTSQVLAVLTLLPIGGTLLALAGLTLAGTVIGLMLATPLFIIFSPVLVPAAIAIAMAVTGFLSSGAFGLTGLSSLSYVLNRLRYATGTEQLDLDHAKRRVQDMTEYVGQKTKEVGQKIENKAHEGQVGRT.

An N-acetylalanine modification is found at Ala2. The tract at residues 2–45 (AEVRDRNLPHQVQVHPQYRLDNTTGGGYGAKNYHSGPSTSQVLA) is polar. The next 3 membrane-spanning stretches (helical) occupy residues 43 to 63 (VLAV…AGLT), 76 to 96 (PLFI…AMAV), and 97 to 117 (TGFL…SYVL). The segment at 46–117 (VLTLLPIGGT…TGLSSLSYVL (72 aa)) is hydrophobic.

Belongs to the oleosin family.

It is found in the lipid droplet. The protein resides in the membrane. May have a structural role to stabilize the lipid body during desiccation of the seed by preventing coalescence of the oil. Probably interacts with both lipid and phospholipid moieties of lipid bodies. May also provide recognition signals for specific lipase anchorage in lipolysis during seedling growth. In Gossypium hirsutum (Upland cotton), this protein is Oleosin 18.2 kDa (MATP6-A).